We begin with the raw amino-acid sequence, 184 residues long: MSKHAASSAKRFSLLALGLMFVGGIVFVWAVDFGIKTTNTLEFCTSCHTMQTNFEEYKESLHYKNTSGVQATCADCHVPKELGPKLVTKIVAAKDVYHEVMGTIDTPEKFEARRWYLANLVWKRLEASDSRECRSCHDYADMDLSEQSRSARSRHSAAQDKGQTCIECHKGVAHHEPTEPDDAS.

Topologically, residues 1 to 14 (MSKHAASSAKRFSL) are cytoplasmic. Residues 15 to 35 (LALGLMFVGGIVFVWAVDFGI) traverse the membrane as a helical segment. The Periplasmic segment spans residues 36-184 (KTTNTLEFCT…HEPTEPDDAS (149 aa)). The heme site is built by cysteine 44, cysteine 47, methionine 50, cysteine 73, cysteine 76, and histidine 77. Residues lysine 89 and aspartate 95 each coordinate substrate. Positions 95, 133, 136, 137, 165, 168, 169, and 174 each coordinate heme.

This sequence belongs to the NapC/NirT/NrfH family. Binds 4 heme groups per subunit.

The protein resides in the cell inner membrane. This chain is Putative tetraheme cytochrome-c type, found in Allochromatium vinosum (strain ATCC 17899 / DSM 180 / NBRC 103801 / NCIMB 10441 / D) (Chromatium vinosum).